A 371-amino-acid polypeptide reads, in one-letter code: Succinyl-diaminopimelate desuccinylase (371 aa).

Position 68 (histidine 68) interacts with Zn(2+). Aspartate 70 is a catalytic residue. Position 99 (aspartate 99) interacts with Zn(2+). Residue glutamate 130 is the Proton acceptor of the active site. 3 residues coordinate Zn(2+): glutamate 131, glutamate 159, and histidine 344.

This sequence belongs to the peptidase M20A family. DapE subfamily. Homodimer. The cofactor is Zn(2+). Requires Co(2+) as cofactor.

The enzyme catalyses N-succinyl-(2S,6S)-2,6-diaminopimelate + H2O = (2S,6S)-2,6-diaminopimelate + succinate. Its pathway is amino-acid biosynthesis; L-lysine biosynthesis via DAP pathway; LL-2,6-diaminopimelate from (S)-tetrahydrodipicolinate (succinylase route): step 3/3. Functionally, catalyzes the hydrolysis of N-succinyl-L,L-diaminopimelic acid (SDAP), forming succinate and LL-2,6-diaminopimelate (DAP), an intermediate involved in the bacterial biosynthesis of lysine and meso-diaminopimelic acid, an essential component of bacterial cell walls. The sequence is that of Succinyl-diaminopimelate desuccinylase from Acidiphilium cryptum (strain JF-5).